The sequence spans 419 residues: L-rhamnose isomerase (419 aa).

Residues H262, D294, and D296 each contribute to the Mn(2+) site.

This sequence belongs to the rhamnose isomerase family. In terms of assembly, homotetramer. Mn(2+) is required as a cofactor.

The protein resides in the cytoplasm. It carries out the reaction L-rhamnopyranose = L-rhamnulose. It functions in the pathway carbohydrate degradation; L-rhamnose degradation; glycerone phosphate from L-rhamnose: step 1/3. In terms of biological role, catalyzes the interconversion of L-rhamnose and L-rhamnulose. In Escherichia coli O157:H7, this protein is L-rhamnose isomerase.